The primary structure comprises 627 residues: Pescadillo homolog (627 aa).

A BRCT domain is found at 321-414 (RLRTLFKGLK…QLLPTNKYFI (94 aa)). Disordered regions lie at residues 436–471 (PEEKALHDPSLIETHEQSDDDSDEEAAQEEEEAVDQ), 489–562 (YKKY…LQAR), and 596–627 (FEAGEKEARKTAKRAARKEAAAAAAKASKLGK). 2 positions are modified to phosphoserine: S453 and S457. Acidic residues-rich tracts occupy residues 453 to 471 (SDDDSDEEAAQEEEEAVDQ) and 498 to 521 (VNEDEEDPEEDEEDEDEEEEEELD). Positions 522 to 533 (EQAKRLKEEKQK) are enriched in basic and acidic residues. A compositionally biased stretch (basic residues) spans 540-549 (KVHKVNKRQL). Composition is skewed to basic and acidic residues over residues 550-559 (HKAEVDEHRL) and 596-605 (FEAGEKEARK). Low complexity predominate over residues 616–627 (AAAAAKASKLGK).

Belongs to the pescadillo family.

It localises to the nucleus. The protein resides in the nucleolus. Its subcellular location is the nucleoplasm. Its function is as follows. Required for maturation of ribosomal RNAs and formation of the large ribosomal subunit. The chain is Pescadillo homolog from Drosophila ananassae (Fruit fly).